The primary structure comprises 207 residues: LexA repressor (207 aa).

Residues 29 to 49 (VREICSAVDLSSTSTVHGHLA) constitute a DNA-binding region (H-T-H motif). Catalysis depends on for autocatalytic cleavage activity residues S128 and K166.

This sequence belongs to the peptidase S24 family. Homodimer.

It catalyses the reaction Hydrolysis of Ala-|-Gly bond in repressor LexA.. Represses a number of genes involved in the response to DNA damage (SOS response), including recA and lexA. In the presence of single-stranded DNA, RecA interacts with LexA causing an autocatalytic cleavage which disrupts the DNA-binding part of LexA, leading to derepression of the SOS regulon and eventually DNA repair. The protein is LexA repressor of Lactobacillus johnsonii (strain CNCM I-12250 / La1 / NCC 533).